Reading from the N-terminus, the 188-residue chain is Peptidyl-tRNA hydrolase (188 aa).

Y14 provides a ligand contact to tRNA. H19 (proton acceptor) is an active-site residue. The tRNA site is built by Y64, N66, and N112.

This sequence belongs to the PTH family. As to quaternary structure, monomer.

Its subcellular location is the cytoplasm. It carries out the reaction an N-acyl-L-alpha-aminoacyl-tRNA + H2O = an N-acyl-L-amino acid + a tRNA + H(+). Hydrolyzes ribosome-free peptidyl-tRNAs (with 1 or more amino acids incorporated), which drop off the ribosome during protein synthesis, or as a result of ribosome stalling. In terms of biological role, catalyzes the release of premature peptidyl moieties from peptidyl-tRNA molecules trapped in stalled 50S ribosomal subunits, and thus maintains levels of free tRNAs and 50S ribosomes. The protein is Peptidyl-tRNA hydrolase of Leuconostoc mesenteroides subsp. mesenteroides (strain ATCC 8293 / DSM 20343 / BCRC 11652 / CCM 1803 / JCM 6124 / NCDO 523 / NBRC 100496 / NCIMB 8023 / NCTC 12954 / NRRL B-1118 / 37Y).